The primary structure comprises 141 residues: Hemoglobin subunit alpha-1/2 (141 aa).

A Globin domain is found at 1 to 141 (VLSPADKTNV…VSTVLTSKYR (141 aa)). The residue at position 3 (S3) is a Phosphoserine. K7 is subject to N6-succinyllysine. T8 is modified (phosphothreonine). The residue at position 11 (K11) is an N6-succinyllysine. N6-acetyllysine; alternate is present on K16. Position 16 is an N6-succinyllysine; alternate (K16). Y24 is subject to Phosphotyrosine. Residue S35 is modified to Phosphoserine. N6-succinyllysine is present on K40. S49 carries the phosphoserine modification. H58 serves as a coordination point for O2. H87 lines the heme b pocket. S102 is modified (phosphoserine). Residue T108 is modified to Phosphothreonine. 2 positions are modified to phosphoserine: S124 and S131. 2 positions are modified to phosphothreonine: T134 and T137. S138 carries the phosphoserine modification.

It belongs to the globin family. In terms of assembly, heterotetramer of two alpha chains and two beta chains. As to expression, red blood cells.

Involved in oxygen transport from the lung to the various peripheral tissues. In Macaca sinica (Toque macaque), this protein is Hemoglobin subunit alpha-1/2.